An 81-amino-acid chain; its full sequence is MNPLVSAASVIAAGLAVGLASIGPGVGQGTAAGQAVEGIARQPEAEGKIRGTLLLSLAFMEALTIYGLVVALALLFANPFV.

2 helical membrane passes run 7–27 and 57–77; these read AASV…PGVG and LAFM…LLFA.

The protein belongs to the ATPase C chain family. In terms of assembly, F-type ATPases have 2 components, F(1) - the catalytic core - and F(0) - the membrane proton channel. F(1) has five subunits: alpha(3), beta(3), gamma(1), delta(1), epsilon(1). F(0) has four main subunits: a(1), b(1), b'(1) and c(10-14). The alpha and beta chains form an alternating ring which encloses part of the gamma chain. F(1) is attached to F(0) by a central stalk formed by the gamma and epsilon chains, while a peripheral stalk is formed by the delta, b and b' chains.

The protein localises to the plastid. It is found in the chloroplast thylakoid membrane. In terms of biological role, f(1)F(0) ATP synthase produces ATP from ADP in the presence of a proton or sodium gradient. F-type ATPases consist of two structural domains, F(1) containing the extramembraneous catalytic core and F(0) containing the membrane proton channel, linked together by a central stalk and a peripheral stalk. During catalysis, ATP synthesis in the catalytic domain of F(1) is coupled via a rotary mechanism of the central stalk subunits to proton translocation. Its function is as follows. Key component of the F(0) channel; it plays a direct role in translocation across the membrane. A homomeric c-ring of between 10-14 subunits forms the central stalk rotor element with the F(1) delta and epsilon subunits. The chain is ATP synthase subunit c, chloroplastic from Arabis hirsuta (Hairy rock-cress).